The chain runs to 351 residues: MGKGGALSESVIKNIVLSYSYVAIWIFLSFTVIVYNKYILDKKMYNWPFPISLTMIHMSFCSTLAFLIIKVFKFVEPVKMTRETYLRSVVPIGALYALSLWLSNSAYIYLSVSFIQMLKALMPVAVYSIGVLFKKEGFKSDTMMNMLSISFGVAIAAYGEARFDVWGVILQLGAVAFEATRLVLIQILLGDKGIKLNPITSLYYVAPCCLAFLFIPWIYVEFPVLRDTSSFHLDYAIFGANSFCAFALNLAVFLLVGKTSALTMNVAGVVKDWLLIAFSWSVIKDTVTPINLFGYGIAFLGVAYYNHAKLQALKAKEEEKKKIQQADEESGRLLEEREGDVEGKKNDQSGN.

Transmembrane regions (helical) follow at residues 15 to 35 (IVLS…VIVY), 49 to 69 (FPIS…FLII), 89 to 109 (VVPI…AYIY), 113 to 133 (SFIQ…GVLF), 141 to 161 (DTMM…YGEA), 165 to 185 (VWGV…LVLI), 205 to 225 (VAPC…FPVL), 236 to 256 (AIFG…FLLV), 263 to 283 (TMNV…WSVI), and 286 to 306 (TVTP…AYYN). In terms of domain architecture, EamA spans 38-156 (YILDKKMYNW…LSISFGVAIA (119 aa)). Residues 321–351 (KKIQQADEESGRLLEEREGDVEGKKNDQSGN) are disordered.

Belongs to the TPT transporter family. TPT (TC 2.A.7.9) subfamily.

The protein localises to the membrane. The protein is Probable sugar phosphate/phosphate translocator At5g11230 of Arabidopsis thaliana (Mouse-ear cress).